Reading from the N-terminus, the 910-residue chain is Leucine--tRNA ligase (910 aa).

The short motif at 42 to 52 (PYPSGKLHMGH) is the 'HIGH' region element. A 'KMSKS' region motif is present at residues 658–662 (TMSKS). K661 provides a ligand contact to ATP.

It belongs to the class-I aminoacyl-tRNA synthetase family.

The protein resides in the cytoplasm. The enzyme catalyses tRNA(Leu) + L-leucine + ATP = L-leucyl-tRNA(Leu) + AMP + diphosphate. The polypeptide is Leucine--tRNA ligase (Acidovorax sp. (strain JS42)).